A 301-amino-acid chain; its full sequence is Zinc finger protein 346 (301 aa).

2 consecutive Matrin-type zinc fingers follow at residues 55–85 and 117–141; these read SQCKVCSAVLISESQKLAHYQSKKHASKVRR and KACSVCNMTFSSPVVAQSHYQGKVH. Zn(2+) is bound by residues Cys57, Cys60, His73, His79, Cys119, Cys122, His135, and His141. The segment at 151 to 177 is disordered; the sequence is GSQTPALPQPEAQAKKDDGMQGPAEQD. 2 consecutive Matrin-type zinc fingers follow at residues 180 to 210 and 230 to 257; these read RFCSICQASFNNPLMAQQHYSGKKHKKHMNK and YPCTVCNIELNSVEQYQAHISGSKHKNH. The disordered stretch occupies residues 250-283; it reads SGSKHKNHAKPKKGPNAFAPPPDNYQPDYQYPTN. Basic residues predominate over residues 251–262; the sequence is GSKHKNHAKPKK.

The protein localises to the nucleus. Its subcellular location is the cytoplasm. In terms of biological role, binds preferentially to dsRNA, but also to RNA-DNA hybrids. This is Zinc finger protein 346 from Danio rerio (Zebrafish).